The sequence spans 1076 residues: Nickel-cobalt-cadmium resistance protein NccA (1076 aa).

Helical transmembrane passes span 14–34, 367–387, 391–411, 419–439, 476–496, 503–523, 562–582, 904–924, 929–949, 960–980, 1004–1024, and 1036–1056; these read WLVL…LNLL, VAKN…ALLG, AAVI…IGMN, LMSL…IIVE, TVYG…FQGV, PMVI…LTFV, MPFL…FTFV, LAII…MAIG, TATV…ALVL, VGFI…ISAI, PVLM…IATG, and VVIG…PAVC.

Belongs to the resistance-nodulation-cell division (RND) (TC 2.A.6) family.

It localises to the cell membrane. Component of the NCC cation-efflux system that confers resistance to nickel, cobalt and cadmium. May form a membrane tunnel, which allows ion transport across the membrane. The chain is Nickel-cobalt-cadmium resistance protein NccA (nccA) from Alcaligenes xylosoxydans xylosoxydans (Achromobacter xylosoxidans).